A 708-amino-acid chain; its full sequence is tRNA(Met) cytidine acetyltransferase TmcA (708 aa).

ATP is bound by residues Gln-189, 215 to 224 (GRGKTSALGL), and Arg-357. In terms of domain architecture, N-acetyltransferase spans 398–574 (PECVEQPERL…YSLLMVRGEH (177 aa)). Acetyl-CoA contacts are provided by residues 502 to 504 (IAV) and 509 to 515 (QRQGIGS).

The protein belongs to the RNA cytidine acetyltransferase family. TmcA subfamily.

Its subcellular location is the cytoplasm. It carries out the reaction cytidine(34) in elongator tRNA(Met) + acetyl-CoA + ATP + H2O = N(4)-acetylcytidine(34) in elongator tRNA(Met) + ADP + phosphate + CoA + H(+). Its function is as follows. Catalyzes the formation of N(4)-acetylcytidine (ac(4)C) at the wobble position of tRNA(Met), by using acetyl-CoA as an acetyl donor and ATP (or GTP). This Vibrio cholerae serotype O1 (strain ATCC 39315 / El Tor Inaba N16961) protein is tRNA(Met) cytidine acetyltransferase TmcA.